A 59-amino-acid polypeptide reads, in one-letter code: UPF0434 protein Shew_1640 (59 aa).

It belongs to the UPF0434 family.

This Shewanella loihica (strain ATCC BAA-1088 / PV-4) protein is UPF0434 protein Shew_1640.